Reading from the N-terminus, the 383-residue chain is Chorismate synthase (383 aa).

Positions 40 and 46 each coordinate NADP(+). FMN contacts are provided by residues 128 to 130 (RAS), glycine 291, 306 to 310 (KPIPT), and arginine 332.

It belongs to the chorismate synthase family. Homotetramer. FMNH2 serves as cofactor.

The catalysed reaction is 5-O-(1-carboxyvinyl)-3-phosphoshikimate = chorismate + phosphate. Its pathway is metabolic intermediate biosynthesis; chorismate biosynthesis; chorismate from D-erythrose 4-phosphate and phosphoenolpyruvate: step 7/7. Catalyzes the anti-1,4-elimination of the C-3 phosphate and the C-6 proR hydrogen from 5-enolpyruvylshikimate-3-phosphate (EPSP) to yield chorismate, which is the branch point compound that serves as the starting substrate for the three terminal pathways of aromatic amino acid biosynthesis. This reaction introduces a second double bond into the aromatic ring system. This is Chorismate synthase from Moorella thermoacetica (strain ATCC 39073 / JCM 9320).